A 224-amino-acid chain; its full sequence is Extracellular protease inhibitor 10 (224 aa).

An N-terminal signal peptide occupies residues 1-22 (MKSAFTLSLALVAVTATISAAA). 3 consecutive Kazal-like domains span residues 23–72 (DDNC…ECAS), 90–127 (TSGT…AKCK), and 156–210 (GYQG…PCPS). N-linked (GlcNAc...) asparagine glycosylation occurs at Asn25. 3 disulfides stabilise this stretch: Cys26/Cys56, Cys30/Cys49, and Cys38/Cys70. A disordered region spans residues 69–92 (ECASTPASSATPSPVTSSTGSTSG). Low complexity predominate over residues 71-92 (ASTPASSATPSPVTSSTGSTSG). Intrachain disulfides connect Cys96–Cys126, Cys100–Cys119, Cys162–Cys193, Cys167–Cys186, and Cys175–Cys208. Asn199 carries N-linked (GlcNAc...) asparagine glycosylation. The disordered stretch occupies residues 202-224 (MVGEGPCPSQEQQQQQQQQQQKL). Over residues 211-224 (QEQQQQQQQQQQKL) the composition is skewed to low complexity.

As to quaternary structure, interacts with host subtilisin-like protease P69B.

Its subcellular location is the secreted. Its function is as follows. Secreted effector that interacts with and inhibits the pathogenesis-related P69B subtilisin-like serine protease of host tomato. Inhibition of host proteases by a pathogen extracellular protease inhibitor forms a specific type of defense-counterdefense mechanism between plants and microbial pathogens. The chain is Extracellular protease inhibitor 10 from Phytophthora infestans (Potato late blight agent).